The chain runs to 219 residues: Lipid A acyltransferase PagP (219 aa).

The signal sequence occupies residues 1-28; sequence MRLILISHSRLFALSALFLIPTFDSLSA. The tract at residues 39–63 is disordered; the sequence is IDRTTQSDSTTQRDSKTRRDPAPSF. Residues 49–59 are compositionally biased toward basic and acidic residues; that stretch reads TQRDSKTRRDP. Catalysis depends on residues His91, Asp134, and Ser135.

Belongs to the lipid A palmitoyltransferase family. In terms of assembly, homodimer.

The protein resides in the cell outer membrane. The catalysed reaction is a lipid A + a 1,2-diacyl-sn-glycero-3-phosphocholine = a hepta-acyl lipid A + a 2-acyl-sn-glycero-3-phosphocholine. It carries out the reaction a lipid IVA + a 1,2-diacyl-sn-glycero-3-phosphocholine = a lipid IVB + a 2-acyl-sn-glycero-3-phosphocholine. It catalyses the reaction a lipid IIA + a 1,2-diacyl-sn-glycero-3-phosphocholine = a lipid IIB + a 2-acyl-sn-glycero-3-phosphocholine. Its function is as follows. Transfers a fatty acid residue from the sn-1 position of a phospholipid to the N-linked hydroxyfatty acid chain on the proximal unit of lipid A or its precursors. This Dickeya zeae (strain Ech586) (Dickeya dadantii (strain Ech586)) protein is Lipid A acyltransferase PagP.